A 1624-amino-acid polypeptide reads, in one-letter code: Reverse gyrase (1624 aa).

The segment at 1–42 adopts an RG N-terminal-type zinc-finger fold; it reads MKAIYRGMCPNCRGAITDERLSNKNPCEGCLSEPILSEDYNE. Positions 9, 12, 27, and 30 each coordinate Zn(2+). ATP is bound by residues glutamine 89 and 106-113; that span reads APTGMGKS. In terms of domain architecture, Helicase ATP-binding spans 93–256; that stretch reads VKRIIRGKSF…KLKKQLAKLL (164 aa). The DEAD box signature appears at 213–216; sequence DDVD. The interval 636–1624 is topoisomerase I; it reads DLVKSALMIV…LYEEIKRYVR (989 aa). Residues 640–803 form the Toprim domain; it reads SALMIVESPN…NIKRIEFHEV (164 aa). Glutamate 646 contacts Mg(2+). The RG C-terminal-type zinc finger occupies 720–749; the sequence is IKRCRDCGHQFVDWEQKGVCPRCGSRNVHD. Positions 723, 726, 739, and 742 each coordinate Zn(2+). Aspartate 772 contributes to the Mg(2+) binding site. Positions 819–1623 constitute a Topo IA-type catalytic domain; that stretch reads NEDRVNAQLV…ELYEEIKRYV (805 aa). The DOD-type homing endonuclease domain maps to 1107 to 1222; sequence IFGVILGKGT…LSVYLYQIGI (116 aa). Residue tyrosine 1366 is the O-(5'-phospho-DNA)-tyrosine intermediate of the active site.

In the N-terminal section; belongs to the DEAD box helicase family. DDVD subfamily. The protein in the C-terminal section; belongs to the type IA topoisomerase family. As to quaternary structure, monomer. The cofactor is Zn(2+). Mg(2+) is required as a cofactor. This protein undergoes a protein self splicing that involves a post-translational excision of the intervening region (intein) followed by peptide ligation.

It is found in the cytoplasm. The catalysed reaction is ATP + H2O = ADP + phosphate + H(+). Functionally, modifies the topological state of DNA by introducing positive supercoils in an ATP-dependent process, increasing the linking number in steps of +1. Binds to single-stranded DNA, transiently cleaves and then rejoins the ends, introducing a positive supercoil in the process. The scissile phosphodiester is attacked by the catalytic tyrosine of the enzyme, resulting in the formation of a DNA-(5'-phosphotyrosyl)-enzyme intermediate. Probably involved in rewinding DNA strands in regions of the chromosome that have opened up to allow replication, transcription, DNA repair and/or for DNA protection. The chain is Reverse gyrase from Pyrococcus horikoshii (strain ATCC 700860 / DSM 12428 / JCM 9974 / NBRC 100139 / OT-3).